We begin with the raw amino-acid sequence, 136 residues long: Late embryogenesis abundant protein D-7 (136 aa).

Disordered regions lie at residues M1–A108 and G117–D136. Residues G11–K58 are compositionally biased toward basic and acidic residues. LEA 11-mer repeat repeat units lie at residues K31 to E41, T42 to E52, T53 to G63, A64 to Q74, and T75 to E85.

The protein belongs to the LEA type 4 family.

Functionally, LEA proteins are late embryonic proteins abundant in higher plant seed embryos. There are two subsets of LEA proteins (5a and 5b), the first ones are expressed when the cotyledon weight reach 80 mg and the second set are expressed above 100 mg. The function of those proteins is not known. In Gossypium hirsutum (Upland cotton), this protein is Late embryogenesis abundant protein D-7.